The primary structure comprises 244 residues: MIRTDAKDGALVLFSGGQDSATCVAWALERYQTVETLGFDYGQRHRVELECREGVRDALKHRFPAWAGRLGDDHMIDLSVLGAISDTAMTRTIEIETAANGLPNTFVPGRNLLFMTIAAAIAYRRGLRVLVGGMCETDFSGYPDCRDDTMKALQVALNLGMDTRVVLETPLMWLDKAQTWQLAEQLGGAALVELIRVETHTCYVGERAELHDWGFGCGECPACKLRKRGYEAYLKGERVTEAPL.

ATP is bound at residue 14–24 (FSGGQDSATCV). Zn(2+) is bound by residues Cys202, Cys217, Cys220, and Cys223.

The protein belongs to the QueC family. Requires Zn(2+) as cofactor.

The catalysed reaction is 7-carboxy-7-deazaguanine + NH4(+) + ATP = 7-cyano-7-deazaguanine + ADP + phosphate + H2O + H(+). Its pathway is purine metabolism; 7-cyano-7-deazaguanine biosynthesis. Its function is as follows. Catalyzes the ATP-dependent conversion of 7-carboxy-7-deazaguanine (CDG) to 7-cyano-7-deazaguanine (preQ(0)). The sequence is that of 7-cyano-7-deazaguanine synthase from Burkholderia vietnamiensis (strain G4 / LMG 22486) (Burkholderia cepacia (strain R1808)).